The sequence spans 141 residues: Large-conductance mechanosensitive channel (141 aa).

The next 3 membrane-spanning stretches (helical) occupy residues 14-34 (VMDL…VKSL), 38-58 (IIMP…YFLG), and 81-101 (GSFI…FLMV).

The protein belongs to the MscL family. Homopentamer.

It localises to the cell inner membrane. Channel that opens in response to stretch forces in the membrane lipid bilayer. May participate in the regulation of osmotic pressure changes within the cell. In Rhizobium rhizogenes (strain K84 / ATCC BAA-868) (Agrobacterium radiobacter), this protein is Large-conductance mechanosensitive channel.